Reading from the N-terminus, the 212-residue chain is ATP synthase subunit 5, mitochondrial (212 aa).

The transit peptide at 1–17 (MFNRVFTRSFASSLRAA) directs the protein to the mitochondrion.

The protein belongs to the ATPase delta chain family. As to quaternary structure, F-type ATPases have 2 components, CF(1) - the catalytic core - and CF(0) - the membrane proton channel. CF(1) has five subunits: alpha(3), beta(3), gamma(1), delta(1), epsilon(1). CF(0) has three main subunits: a, b and c.

It is found in the mitochondrion. It localises to the mitochondrion inner membrane. Mitochondrial membrane ATP synthase (F(1)F(0) ATP synthase or Complex V) produces ATP from ADP in the presence of a proton gradient across the membrane which is generated by electron transport complexes of the respiratory chain. F-type ATPases consist of two structural domains, F(1) - containing the extramembraneous catalytic core and F(0) - containing the membrane proton channel, linked together by a central stalk and a peripheral stalk. During catalysis, ATP synthesis in the catalytic domain of F(1) is coupled via a rotary mechanism of the central stalk subunits to proton translocation. Part of the complex F(0) domain and the peripheric stalk, which acts as a stator to hold the catalytic alpha(3)beta(3) subcomplex and subunit a/ATP6 static relative to the rotary elements. This chain is ATP synthase subunit 5, mitochondrial (ATP5), found in Saccharomyces cerevisiae (strain ATCC 204508 / S288c) (Baker's yeast).